The sequence spans 363 residues: Aminomethyltransferase (363 aa).

It belongs to the GcvT family. As to quaternary structure, the glycine cleavage system is composed of four proteins: P, T, L and H.

It carries out the reaction N(6)-[(R)-S(8)-aminomethyldihydrolipoyl]-L-lysyl-[protein] + (6S)-5,6,7,8-tetrahydrofolate = N(6)-[(R)-dihydrolipoyl]-L-lysyl-[protein] + (6R)-5,10-methylene-5,6,7,8-tetrahydrofolate + NH4(+). The glycine cleavage system catalyzes the degradation of glycine. The polypeptide is Aminomethyltransferase (Thermotoga neapolitana (strain ATCC 49049 / DSM 4359 / NBRC 107923 / NS-E)).